A 260-amino-acid chain; its full sequence is Emerin (260 aa).

N-acetylmethionine is present on M1. In terms of domain architecture, LEM spans 1–45 (MDDYAVLSDTELAAVLRQYNIPHGPILGSTRKLYEKKIFEYETQR). A phosphoserine mark is found at S8 and S29. Residues 46-224 (RRLSPPSSSS…PTAALGQDRQ (179 aa)) form an interaction with F-actin region. S49 carries the phosphoserine; by PKA modification. Phosphoserine occurs at positions 54, 69, 72, 88, 99, 142, 143, and 144. Y162 is subject to Phosphotyrosine. The interval 169–188 (RPISNVSRSSLGLSYYPRSS) is interaction with CTNNB1. Phosphoserine occurs at positions 172, 175, and 177. A disordered region spans residues 184–206 (YPRSSTSSVSSSSSSPSSWLTRR). A compositionally biased stretch (low complexity) spans 187-201 (SSTSSVSSSSSSPSS). Residues 225-245 (VPLWGQLLLFLAFATFLLFVY) form a helical membrane-spanning segment.

Interacts with lamins A and C, BANF1, GMCL, BCLAF1 and YTHDC1/YT521. Interacts with TMEM43; the interaction retains emerin in the inner nuclear membrane. Interacts with ACTB, SPTAN1, F-actin, CTNNB1 and beta-tubulin. Interacts with SUN1 and SUN2. Interacts with TMEM201. Interacts with NEMP1.

Its subcellular location is the nucleus inner membrane. The protein resides in the nucleus outer membrane. Functionally, stabilizes and promotes the formation of a nuclear actin cortical network. Stimulates actin polymerization in vitro by binding and stabilizing the pointed end of growing filaments. Inhibits beta-catenin activity by preventing its accumulation in the nucleus. Acts by influencing the nuclear accumulation of beta-catenin through a CRM1-dependent export pathway. Links centrosomes to the nuclear envelope via a microtubule association. Required for proper localization of non-farnesylated prelamin-A/C. Together with NEMP1, contributes to nuclear envelope stiffness in germ cells. This Rattus norvegicus (Rat) protein is Emerin (Emd).